Consider the following 500-residue polypeptide: NAD(P)H-quinone oxidoreductase chain 4, chloroplastic (500 aa).

14 helical membrane passes run 4-24 (FPWL…MLFL), 35-55 (YTIC…CYNF), 87-107 (IGTI…AFPV), 113-130 (LFHF…GSFS), 134-154 (LLLF…LLSM), 167-187 (FILY…GISL), 211-231 (ILFY…IPLH), 242-262 (HYST…YGLV), 272-292 (AHSM…IYAA), 305-325 (IAYS…SITD), 330-350 (GAIL…FLAG), 386-406 (LALP…GIIT), 416-436 (ILII…LLSM), and 462-482 (LFLS…PDFV).

The protein belongs to the complex I subunit 4 family.

The protein localises to the plastid. It is found in the chloroplast thylakoid membrane. The enzyme catalyses a plastoquinone + NADH + (n+1) H(+)(in) = a plastoquinol + NAD(+) + n H(+)(out). The catalysed reaction is a plastoquinone + NADPH + (n+1) H(+)(in) = a plastoquinol + NADP(+) + n H(+)(out). This Nasturtium officinale (Watercress) protein is NAD(P)H-quinone oxidoreductase chain 4, chloroplastic.